Consider the following 503-residue polypeptide: ATP synthase subunit alpha (503 aa).

Residue 169-176 (GDRKTGKT) participates in ATP binding.

It belongs to the ATPase alpha/beta chains family. F-type ATPases have 2 components, CF(1) - the catalytic core - and CF(0) - the membrane proton channel. CF(1) has five subunits: alpha(3), beta(3), gamma(1), delta(1), epsilon(1). CF(0) has three main subunits: a(1), b(2) and c(9-12). The alpha and beta chains form an alternating ring which encloses part of the gamma chain. CF(1) is attached to CF(0) by a central stalk formed by the gamma and epsilon chains, while a peripheral stalk is formed by the delta and b chains.

The protein resides in the cell membrane. It catalyses the reaction ATP + H2O + 4 H(+)(in) = ADP + phosphate + 5 H(+)(out). Produces ATP from ADP in the presence of a proton gradient across the membrane. The alpha chain is a regulatory subunit. The protein is ATP synthase subunit alpha of Lactobacillus helveticus (strain DPC 4571).